We begin with the raw amino-acid sequence, 286 residues long: Bifunctional protein FolD (286 aa).

NADP(+)-binding positions include 165 to 167 and Ser190; that span reads GRS.

Belongs to the tetrahydrofolate dehydrogenase/cyclohydrolase family. In terms of assembly, homodimer.

It carries out the reaction (6R)-5,10-methylene-5,6,7,8-tetrahydrofolate + NADP(+) = (6R)-5,10-methenyltetrahydrofolate + NADPH. It catalyses the reaction (6R)-5,10-methenyltetrahydrofolate + H2O = (6R)-10-formyltetrahydrofolate + H(+). It functions in the pathway one-carbon metabolism; tetrahydrofolate interconversion. In terms of biological role, catalyzes the oxidation of 5,10-methylenetetrahydrofolate to 5,10-methenyltetrahydrofolate and then the hydrolysis of 5,10-methenyltetrahydrofolate to 10-formyltetrahydrofolate. The sequence is that of Bifunctional protein FolD from Staphylococcus epidermidis (strain ATCC 35984 / DSM 28319 / BCRC 17069 / CCUG 31568 / BM 3577 / RP62A).